The chain runs to 78 residues: Disintegrin DisBa-01 (78 aa).

Residues 1-78 form the Disintegrin domain; that stretch reads GNELLEAGEE…AGCPRNPFHA (78 aa). Intrachain disulfides connect Cys11–Cys26, Cys13–Cys21, Cys20–Cys43, Cys34–Cys40, Cys39–Cys64, and Cys52–Cys71. A Cell attachment site motif is present at residues 56–58; that stretch reads RGD.

The protein belongs to the venom metalloproteinase (M12B) family. P-II subfamily. P-IIa sub-subfamily. Monomer. In terms of tissue distribution, expressed by the venom gland.

It is found in the secreted. Its function is as follows. This recombinant disintegrin antagonizes integrins alpha-IIb/beta-3 (ITGA2B/ITGB3) and alpha-V/beta-3 (ITGAV/ITGB3). On ITGA2B/ITGB3, it interferes with the outside/-in phosphorylation of the focal adhesion kinase (PTK2 / FAK) downstream of the integrin. It strongly inhibits platelet aggregation induced by ADP, thrombin, and collagen, abolishes and reverses dynamic platelet recruitment to immobilized fibrinogen. In vivo, it induces a dramatic increase in the tail bleeding time, and has a strong antithrombotic activity. On ITGAV/ITGB3, it inhibits the adhesion of ITGAV/ITGB3-expressing human microvascular endothelial cell line and murine melanoma cell line to vitronectin (IC(50) are 555 nM and 225 nM, respectively), and transiently inhibits their proliferation without direct cell toxicity. In vivo, it potently inhibits angiogenesis and metastasis, probably due to its capability to strongly inhibit the expression of VEGF and its receptors in endothelial cells. It also inhibits tumor cell migration in vitro. In Bothrops alternatus (Urutu), this protein is Disintegrin DisBa-01.